Reading from the N-terminus, the 219-residue chain is Claudin-20 (219 aa).

Residues 1 to 7 (MASAGLQ) lie on the Cytoplasmic side of the membrane. Residues 8 to 28 (LLAFILALSGVSGVLTATLLP) form a helical membrane-spanning segment. The Extracellular portion of the chain corresponds to 29–81 (NWKVNVDVDSNIITAIVQLHGLWMDCTWYSTGMFSCALKHSILSLPIHVQAAR). The chain crosses the membrane as a helical span at residues 82-102 (ATMVLACVLSALGICTSTVGM). The Cytoplasmic segment spans residues 103 to 118 (KCTRLGGDRETKSHAS). Residues 119 to 139 (FAGGVCFMSAGISSLISTVWY) form a helical membrane-spanning segment. The Extracellular portion of the chain corresponds to 140–160 (TKEIIANFLDLTVPESNKHEP). The chain crosses the membrane as a helical span at residues 161–181 (GGAIYIGFISAMLLFISGMIF). At 182–219 (CTSCIKRNPEARLDPPTQQPISNTQLENNSTHNLKDYV) the chain is on the cytoplasmic side. The disordered stretch occupies residues 193–219 (RLDPPTQQPISNTQLENNSTHNLKDYV). Residues 200 to 213 (QPISNTQLENNSTH) show a composition bias toward polar residues.

The protein belongs to the claudin family.

Its subcellular location is the cell junction. It is found in the tight junction. The protein resides in the cell membrane. Plays a major role in tight junction-specific obliteration of the intercellular space, through calcium-independent cell-adhesion activity. This chain is Claudin-20 (CLDN20), found in Homo sapiens (Human).